We begin with the raw amino-acid sequence, 343 residues long: tRNA N6-adenosine threonylcarbamoyltransferase (343 aa).

Fe cation-binding residues include His116 and His120. Residues 138–142 (LVSGG), Asp172, Gly185, Asp189, and Asn277 contribute to the substrate site. Asp305 provides a ligand contact to Fe cation.

The protein belongs to the KAE1 / TsaD family. Fe(2+) is required as a cofactor.

It is found in the cytoplasm. It catalyses the reaction L-threonylcarbamoyladenylate + adenosine(37) in tRNA = N(6)-L-threonylcarbamoyladenosine(37) in tRNA + AMP + H(+). In terms of biological role, required for the formation of a threonylcarbamoyl group on adenosine at position 37 (t(6)A37) in tRNAs that read codons beginning with adenine. Is involved in the transfer of the threonylcarbamoyl moiety of threonylcarbamoyl-AMP (TC-AMP) to the N6 group of A37, together with TsaE and TsaB. TsaD likely plays a direct catalytic role in this reaction. In Mycobacterium ulcerans (strain Agy99), this protein is tRNA N6-adenosine threonylcarbamoyltransferase.